Consider the following 1826-residue polypeptide: Kinesin-like protein KIF13B (1826 aa).

Residues 5-353 (KVKVAVRIRP…LRYADRAKHI (349 aa)) enclose the Kinesin motor domain. 103–110 (GQTGSGKS) contributes to the ATP binding site. A coiled-coil region spans residues 364-439 (NARIIRDLRE…ESLGISLQSS (76 aa)). Positions 471-535 (TLIGSANSQD…LHHGDRILWG (65 aa)) constitute an FHA domain. Positions 546–582 (KKKKKAEREDEDQDPSMKNENSSEQLDVDGDSSSEVS) are disordered. Polar residues predominate over residues 561–570 (SMKNENSSEQ). Coiled coils occupy residues 607 to 710 (MQSI…LDKR), 752 to 772 (SLEKLDNRLLDMRDLYQEWKE), and 1096 to 1143 (LNAL…ERNA). Ser-661 bears the Phosphoserine mark. Residues 1367–1420 (EQLTGKGKLSRRSISSPNVNRLSGSRQDLIPSYSLGSNKGRWESQQDVSQTTVS) form a disordered region. Composition is skewed to polar residues over residues 1378 to 1392 (RSISSPNVNRLSGSR) and 1409 to 1420 (ESQQDVSQTTVS). The residue at position 1379 (Ser-1379) is a Phosphoserine. A Phosphoserine; by MARK2 modification is found at Ser-1381. Phosphoserine is present on residues Ser-1382 and Ser-1391. Residue Ser-1410 is modified to Phosphoserine; by MARK2. A phosphoserine mark is found at Ser-1432, Ser-1438, and Ser-1537. Residue Thr-1545 is modified to Phosphothreonine. Ser-1559 bears the Phosphoserine mark. Positions 1579 to 1607 (SDALGPGLDAAAPPGSMPTAPEAEPEAPI) are enriched in low complexity. 2 disordered regions span residues 1579–1650 (SDAL…RVRR) and 1662–1698 (MLAGDPGCSPGAEGNAPAPGAGGQALASDSEEADEVP). The span at 1608 to 1624 (SHPPPPTAVPAEEPPGP) shows a compositional bias: pro residues. Ser-1644 bears the Phosphoserine mark. A compositionally biased stretch (low complexity) spans 1671–1688 (PGAEGNAPAPGAGGQALA). A CAP-Gly domain is found at 1721-1763 (GPADFQEGTWVGVELDLPSGKNDGSIGGKQYFRCNPGYGLLVR). A Phosphoserine modification is found at Ser-1797.

It belongs to the TRAFAC class myosin-kinesin ATPase superfamily. Kinesin family. Binds to DLG1 and DLG4. Interacts (when phosphorylated at Ser-1381 and Ser-1410) with 14-3-3. Post-translationally, phosphorylated at Ser-1381 and Ser-1410 by MARK2, promoting interaction with 14-3-3 and inhibiting microtubule-dependent accumulation and formation of axons. In terms of tissue distribution, ubiquitous.

The protein resides in the cytoplasm. It is found in the cytoskeleton. It localises to the cell projection. Its subcellular location is the axon. Involved in reorganization of the cortical cytoskeleton. Regulates axon formation by promoting the formation of extra axons. May be functionally important for the intracellular trafficking of MAGUKs and associated protein complexes. The protein is Kinesin-like protein KIF13B (KIF13B) of Homo sapiens (Human).